Here is a 474-residue protein sequence, read N- to C-terminus: uncharacterized protein (474 aa).

A helical transmembrane segment spans residues 3–23 (LTLWLVLGAVGVGAVGTGVGF). The disordered stretch occupies residues 171-296 (VSDGSSSKTR…KETKDRTKVD (126 aa)). Positions 180–210 (RTPKKTKTSKKKPIKKKSSKSKSSKGSKKQK) are enriched in basic residues. The segment covering 231 to 253 (TRSQSKQQKGQEQATDQTDSEGV) has biased composition (polar residues). Residues 257-266 (EGADNTDTEL) are compositionally biased toward acidic residues. The segment covering 267–281 (VETTAETTEQEATTK) has biased composition (low complexity). A compositionally biased stretch (basic and acidic residues) spans 282 to 296 (STKDTKETKDRTKVD).

The protein localises to the membrane. This is an uncharacterized protein from Mycoplasma pneumoniae (strain ATCC 29342 / M129 / Subtype 1) (Mycoplasmoides pneumoniae).